A 500-amino-acid polypeptide reads, in one-letter code: MSAGSPAEPRPVPGSVHSVSVSIPDVRSVIGFESGDPATLRRIAWGYPRFRTHPYVARVAALVAGAVGGRAQDLVLTRSVRAAEAAAAYAGLAPGAVFEASGVRGVRVAEDDPALAAVRGHVQHTGAHLTSREAEDVLLEAGLIEARQAEEAVSEEPAEAVRSALATAYGAGDPADVSLHNSGMNAVAAAVAAVTDLQRPAGRRRWIQLGWIFFDTMSLLDKRLFGTDHVTVPDPFDLAALSRVVAAHPGQLAGIIAELPSNPSLRCPDVPALREIADRAGCALVLDATIATPHNVDVLGYADVVCESLTKYATGSADVLMGAAVVGSASPWAAQLREGLRRFGDVPYHRDAARVAARIRDYGDRMKRVNAGAVALAGFLERQSAVRAVSWPYDAASQANYRKVERLSDAPGGLLMVDLRVPLERVYDRLAVAKGPSFGAEFTMASPQIFIAHFDLLSTPEGRAELRSRGLHRDMLRISVGVEDPELIAEVFRDAFDGAG.

Lysine 311 carries the N6-(pyridoxal phosphate)lysine modification.

Belongs to the trans-sulfuration enzymes family. Requires pyridoxal 5'-phosphate as cofactor.

It carries out the reaction L-2-amino-4-chloropent-4-enoate = L-propargylglycine + chloride + H(+). It participates in amino-acid metabolism. The protein operates within antibiotic biosynthesis. Functionally, involved in the biosynthesis of terminal alkyne-containing amino acids such as L-propargylglycine (Pra) and L-beta-ethynylserine, that are produced as antibiotics by S.cattleya. Catalyzes gamma-elimination of chloride from 4-chloro-allyl-L-glycine (also named L-2-amino-4-chloropent-4-enoate), followed by an isomerization, to form the terminal-alkyne product L-propargylglycine. This Streptantibioticus cattleyicolor (strain ATCC 35852 / DSM 46488 / JCM 4925 / NBRC 14057 / NRRL 8057) (Streptomyces cattleya) protein is L-2-amino-4-chloropent-4-enoate dechlorinase/desaturase.